Here is an 80-residue protein sequence, read N- to C-terminus: Three-finger toxin MALT0059C (80 aa).

The N-terminal stretch at 1-21 is a signal peptide; it reads MRTLLLTLVVVTIVCLDLGNS. Intrachain disulfides connect Cys24–Cys41, Cys35–Cys60, Cys64–Cys72, and Cys73–Cys78.

The protein belongs to the three-finger toxin family. Short-chain subfamily. In terms of tissue distribution, expressed by the venom gland.

It localises to the secreted. Neurotoxin. Blocks muscular nicotinic acetylcholine receptors (nAChR). This chain is Three-finger toxin MALT0059C, found in Micrurus altirostris (Uruguayan coral snake).